The primary structure comprises 377 residues: tRNA-queuosine alpha-mannosyltransferase (377 aa).

It belongs to the glycosyltransferase group 1 family. Glycosyltransferase 4 subfamily.

The enzyme catalyses queuosine(34) in tRNA(Asp) + GDP-alpha-D-mannose = O-4''-alpha-D-mannosylqueuosine(34) in tRNA(Asp) + GDP + H(+). Functionally, glycosyltransferase that specifically catalyzes mannosylation of cytoplasmic tRNA(Asp) modified with queuosine at position 34 (queuosine(34)). Mannosylates the cyclopentene moiety of queuosine(34) in tRNA(Asp) to form mannosyl-queuosine(34). This is tRNA-queuosine alpha-mannosyltransferase from Drosophila melanogaster (Fruit fly).